Reading from the N-terminus, the 313-residue chain is tRNA-cytidine(32) 2-sulfurtransferase (313 aa).

Residues 47–52 carry the PP-loop motif motif; that stretch reads SGGKDS. Residues cysteine 122, cysteine 125, and cysteine 213 each contribute to the [4Fe-4S] cluster site.

This sequence belongs to the TtcA family. Homodimer. Mg(2+) serves as cofactor. It depends on [4Fe-4S] cluster as a cofactor.

It localises to the cytoplasm. The catalysed reaction is cytidine(32) in tRNA + S-sulfanyl-L-cysteinyl-[cysteine desulfurase] + AH2 + ATP = 2-thiocytidine(32) in tRNA + L-cysteinyl-[cysteine desulfurase] + A + AMP + diphosphate + H(+). It participates in tRNA modification. Catalyzes the ATP-dependent 2-thiolation of cytidine in position 32 of tRNA, to form 2-thiocytidine (s(2)C32). The sulfur atoms are provided by the cysteine/cysteine desulfurase (IscS) system. The polypeptide is tRNA-cytidine(32) 2-sulfurtransferase (Yersinia enterocolitica serotype O:8 / biotype 1B (strain NCTC 13174 / 8081)).